A 271-amino-acid chain; its full sequence is Mannosyl-3-phosphoglycerate phosphatase (271 aa).

Asp13 acts as the Nucleophile in catalysis. The Mg(2+) site is built by Asp13, Asp15, and Asp214.

The protein belongs to the HAD-like hydrolase superfamily. MPGP family. It depends on Mg(2+) as a cofactor.

It localises to the cytoplasm. The catalysed reaction is 2-O-(alpha-D-mannosyl)-3-phosphoglycerate + H2O = (2R)-2-O-(alpha-D-mannosyl)-glycerate + phosphate. This is Mannosyl-3-phosphoglycerate phosphatase (yedP) from Escherichia coli O6:H1 (strain CFT073 / ATCC 700928 / UPEC).